The chain runs to 154 residues: Ribosome maturation factor RimP (154 aa).

Belongs to the RimP family.

The protein resides in the cytoplasm. Its function is as follows. Required for maturation of 30S ribosomal subunits. The chain is Ribosome maturation factor RimP from Salmonella agona (strain SL483).